The following is a 147-amino-acid chain: Methylglyoxal synthase (147 aa).

Residues 1–147 form the MGS-like domain; sequence MKGQRNIGMV…TPYVKRLGAK (147 aa). Substrate is bound by residues histidine 12, lysine 16, 38–41, and 59–60; these read TGTT and SG. Aspartate 65 acts as the Proton donor/acceptor in catalysis. Histidine 92 serves as a coordination point for substrate.

The protein belongs to the methylglyoxal synthase family.

It carries out the reaction dihydroxyacetone phosphate = methylglyoxal + phosphate. Its function is as follows. Catalyzes the formation of methylglyoxal from dihydroxyacetone phosphate. This is Methylglyoxal synthase from Oleidesulfovibrio alaskensis (strain ATCC BAA-1058 / DSM 17464 / G20) (Desulfovibrio alaskensis).